A 216-amino-acid chain; its full sequence is Pyrrolidone-carboxylate peptidase (216 aa).

Active-site residues include glutamate 80, cysteine 143, and histidine 167.

This sequence belongs to the peptidase C15 family. In terms of assembly, homotetramer.

It is found in the cytoplasm. The catalysed reaction is Release of an N-terminal pyroglutamyl group from a polypeptide, the second amino acid generally not being Pro.. Removes 5-oxoproline from various penultimate amino acid residues except L-proline. The protein is Pyrrolidone-carboxylate peptidase (pcp) of Streptomyces coelicolor (strain ATCC BAA-471 / A3(2) / M145).